Consider the following 79-residue polypeptide: D-alanyl carrier protein (79 aa).

A Carrier domain is found at 1 to 77; the sequence is MDTKQAVLDI…KIIAKVESLR (77 aa). S35 is subject to O-(pantetheine 4'-phosphoryl)serine.

It belongs to the DltC family. 4'-phosphopantetheine is transferred from CoA to a specific serine of apo-DCP.

It is found in the cytoplasm. It functions in the pathway cell wall biogenesis; lipoteichoic acid biosynthesis. In terms of biological role, carrier protein involved in the D-alanylation of lipoteichoic acid (LTA). The loading of thioester-linked D-alanine onto DltC is catalyzed by D-alanine--D-alanyl carrier protein ligase DltA. The DltC-carried D-alanyl group is further transferred to cell membrane phosphatidylglycerol (PG) by forming an ester bond, probably catalyzed by DltD. D-alanylation of LTA plays an important role in modulating the properties of the cell wall in Gram-positive bacteria, influencing the net charge of the cell wall. This Lactobacillus gasseri (strain ATCC 33323 / DSM 20243 / BCRC 14619 / CIP 102991 / JCM 1131 / KCTC 3163 / NCIMB 11718 / NCTC 13722 / AM63) protein is D-alanyl carrier protein.